We begin with the raw amino-acid sequence, 194 residues long: MMINTQEDKLVSAHDAEEFHRFFVGHDSDLQQEVTTLLTREAHLLDIQAYNAWLEHCVAPEIKYQVISREFRSTSERRYQLNDAVNIYNENYQHLKVRVEHQMDPQNWANSPKIRFTRFVTNVTAAKDKIVPDLLHVRSNLILHRARRGNQVDVFYATREDKWKRIEGGGIQLVERLVDYPERILQTHNLMTFL.

The protein belongs to the bacterial ring-hydroxylating dioxygenase beta subunit family. As to quaternary structure, the naphthalene dioxygenase (NDO) multicomponent enzyme system is composed of an electron transfer component and a dioxygenase component (iron sulfur protein (ISP)). The electron transfer component is composed of a ferredoxin reductase (NagAa) and a ferredoxin (NagAb), and the dioxygenase component is formed by a large alpha subunit (NagAc) and a small beta subunit (NagAd).

It functions in the pathway aromatic compound metabolism; naphthalene degradation. Functionally, component of the naphthalene dioxygenase (NDO) multicomponent enzyme system which catalyzes the incorporation of both atoms of molecular oxygen into naphthalene to form cis-(1R,2S)-dihydroxy-1,2-dihydronaphthalene. Also able to use styrene as substrate. The beta subunit seems to have a structural role in the holoenzyme. The protein is Naphthalene 1,2-dioxygenase system, small oxygenase component of Ralstonia sp.